A 215-amino-acid polypeptide reads, in one-letter code: Cytochrome b6 (215 aa).

The helical transmembrane segment at 32–52 (IFYCFGGIVFTCFLVQVATGF) threads the bilayer. Cys35 lines the heme c pocket. Residues His86 and His100 each coordinate heme b. 3 consecutive transmembrane segments (helical) span residues 90–110 (ASMMVMMMVLHVFRVYLTGGF), 116–136 (LTWVTGVILAVVTVSFGVTGY), and 186–206 (AHTFVLPLAAAVLMLTHFLMI). His187 and His202 together coordinate heme b.

It belongs to the cytochrome b family. PetB subfamily. In terms of assembly, the 4 large subunits of the cytochrome b6-f complex are cytochrome b6, subunit IV (17 kDa polypeptide, PetD), cytochrome f and the Rieske protein, while the 4 small subunits are PetG, PetL, PetM and PetN. The complex functions as a dimer. The cofactor is heme b. It depends on heme c as a cofactor.

The protein localises to the plastid. It is found in the chloroplast thylakoid membrane. Component of the cytochrome b6-f complex, which mediates electron transfer between photosystem II (PSII) and photosystem I (PSI), cyclic electron flow around PSI, and state transitions. This Trieres chinensis (Marine centric diatom) protein is Cytochrome b6.